A 142-amino-acid chain; its full sequence is Large ribosomal subunit protein uL11 (142 aa).

Belongs to the universal ribosomal protein uL11 family. Part of the ribosomal stalk of the 50S ribosomal subunit. Interacts with L10 and the large rRNA to form the base of the stalk. L10 forms an elongated spine to which L12 dimers bind in a sequential fashion forming a multimeric L10(L12)X complex. In terms of processing, one or more lysine residues are methylated.

Forms part of the ribosomal stalk which helps the ribosome interact with GTP-bound translation factors. The protein is Large ribosomal subunit protein uL11 of Shewanella oneidensis (strain ATCC 700550 / JCM 31522 / CIP 106686 / LMG 19005 / NCIMB 14063 / MR-1).